We begin with the raw amino-acid sequence, 119 residues long: Large ribosomal subunit protein eL31z (119 aa).

It belongs to the eukaryotic ribosomal protein eL31 family.

The protein is Large ribosomal subunit protein eL31z (RPL31A) of Arabidopsis thaliana (Mouse-ear cress).